The sequence spans 62 residues: Large ribosomal subunit protein bL28 (62 aa).

It belongs to the bacterial ribosomal protein bL28 family.

In Streptococcus agalactiae serotype Ia (strain ATCC 27591 / A909 / CDC SS700), this protein is Large ribosomal subunit protein bL28.